The following is a 407-amino-acid chain: Imidazolonepropionase (407 aa).

Positions 72 and 74 each coordinate Fe(3+). Zn(2+)-binding residues include His-72 and His-74. 4-imidazolone-5-propanoate contacts are provided by Arg-81, Tyr-144, and His-177. Residue Tyr-144 coordinates N-formimidoyl-L-glutamate. A Fe(3+)-binding site is contributed by His-242. Residue His-242 coordinates Zn(2+). Position 245 (Gln-245) interacts with 4-imidazolone-5-propanoate. Asp-317 is a binding site for Fe(3+). Asp-317 serves as a coordination point for Zn(2+). N-formimidoyl-L-glutamate-binding residues include Asn-319 and Gly-321. Thr-322 provides a ligand contact to 4-imidazolone-5-propanoate.

It belongs to the metallo-dependent hydrolases superfamily. HutI family. Requires Zn(2+) as cofactor. Fe(3+) serves as cofactor.

The protein resides in the cytoplasm. It carries out the reaction 4-imidazolone-5-propanoate + H2O = N-formimidoyl-L-glutamate. It functions in the pathway amino-acid degradation; L-histidine degradation into L-glutamate; N-formimidoyl-L-glutamate from L-histidine: step 3/3. Its function is as follows. Catalyzes the hydrolytic cleavage of the carbon-nitrogen bond in imidazolone-5-propanoate to yield N-formimidoyl-L-glutamate. It is the third step in the universal histidine degradation pathway. The protein is Imidazolonepropionase of Rhizobium rhizogenes (Agrobacterium rhizogenes).